Here is a 444-residue protein sequence, read N- to C-terminus: Acetyl-CoA--deacetylcephalosporin C acetyltransferase (444 aa).

Residues 1–71 (MLPSAQVARL…PQIANRFEAS (71 aa)) constitute a propeptide that is removed on maturation. Residues 112-425 (VIVCHTLTSS…DTNEGHDFFV (314 aa)) enclose the AB hydrolase-1 domain. Active-site residues include S208 and H421.

Belongs to the AB hydrolase superfamily. MetX family. As to quaternary structure, heterodimer of chain I and chain II.

The catalysed reaction is deacetylcephalosporin C + acetyl-CoA = cephalosporin C + CoA. It functions in the pathway antibiotic biosynthesis; cephalosporin C biosynthesis. Its function is as follows. Catalyzes the conversion of deacetylcephalosporin C to cephalosporin C. This Hapsidospora chrysogena (Acremonium chrysogenum) protein is Acetyl-CoA--deacetylcephalosporin C acetyltransferase (CEFG).